The sequence spans 1377 residues: Neogenin (1377 aa).

A signal peptide spans Ala-1–Ala-2. Topologically, residues Ala-3–Leu-1074 are extracellular. 4 consecutive Ig-like C2-type domains span residues Pro-21–Lys-114, Pro-121–Leu-206, Pro-198–Thr-305, and Pro-310–Ile-395. Asn-42 is a glycosylation site (N-linked (GlcNAc...) asparagine). Intrachain disulfides connect Cys-43-Cys-98, Cys-142-Cys-190, and Cys-239-Cys-289. Asn-179 carries N-linked (GlcNAc...) asparagine glycosylation. The N-linked (GlcNAc...) asparagine glycan is linked to Asn-295. An intrachain disulfide couples Cys-331 to Cys-379. Fibronectin type-III domains follow at residues Ala-410–Glu-504, Pro-510–Asp-600, Ala-605–Ser-700, Val-710–Thr-800, Pro-825–Thr-924, and Pro-926–Ala-1023. 2 N-linked (GlcNAc...) asparagine glycosylation sites follow: Asn-439 and Asn-458. N-linked (GlcNAc...) asparagine glycosylation is found at Asn-608 and Asn-684. Asn-878 is a glycosylation site (N-linked (GlcNAc...) asparagine). The tract at residues Gly-1010 to Thr-1066 is disordered. A compositionally biased stretch (basic and acidic residues) spans Pro-1021–Pro-1030. Over residues Ser-1056–Thr-1066 the composition is skewed to polar residues. A helical transmembrane segment spans residues Leu-1075 to Phe-1095. The Cytoplasmic portion of the chain corresponds to Cys-1096–Ala-1377. Positions Pro-1143–Pro-1281 are disordered. Phosphoserine is present on residues Ser-1147 and Ser-1163. Composition is skewed to polar residues over residues Pro-1160–Asn-1176, Gln-1213–Thr-1238, and Ala-1246–Pro-1265. Phosphothreonine is present on Thr-1167. Ser-1317 is subject to Phosphoserine. Residue Thr-1320 is modified to Phosphothreonine. 3 positions are modified to phosphoserine: Ser-1348, Ser-1350, and Ser-1351.

Belongs to the immunoglobulin superfamily. DCC family. As to quaternary structure, interacts with MYO10. Interacts with RGMA and RGMB. Interacts with BMP2, BMP4, BMP6, and BMP7.

It localises to the cell membrane. Its function is as follows. Multi-functional cell surface receptor regulating cell adhesion in many diverse developmental processes, including neural tube and mammary gland formation, myogenesis and angiogenesis. Receptor for members of the BMP, netrin, and repulsive guidance molecule (RGM) families. Netrin-Neogenin interactions result in a chemoattractive axon guidance response and cell-cell adhesion, the interaction between NEO1/Neogenin and RGMa and RGMb induces a chemorepulsive response. This chain is Neogenin (Neo1), found in Rattus norvegicus (Rat).